We begin with the raw amino-acid sequence, 707 residues long: MDLEAGSIRPRSDGEGGGPAAGRETDDSNVWKDLFLAYKTLGVVFGGLVTSPLYVYPSMNLSSPTEADYLGIYSIMFWTLTLIGVVKYVCIALNADDHGEGGTFAMYSLLCRHADIGILPSKRVYAEEDPLLHSQSAIARRPSRLGKFFEQSITARRVLLFVAVLGMCMLIGDGILTPAISVLSAIDGIRGPFPTVSKPVVEALSAAILIGLFLLQKYGTSKVSFLFSPIMAAWTFTTPIIGLYSIVHYYPGIFKAISPYYIVHFFLRNKRQGWQLLGGTVLCITGAEAMFADLGHFSKKAIQIAFLSSIYPSLVLTYAGQTAYLINNVNDFGDGFYKFVPRPVYWPMFVVATLAAIVASQSLISATFSVIKQSVVLDYFPRVKVVHTSQHKEGEVYSPEINYILMVLCVGVILGFGGGKAIGNAFGVVVIMVMLITTVLLTLVMIIIWRTPLVLAGLYFVPFFIMEGAYVSAVFTKIPEGGWLPFAVSITLAMIMFGWYYGRQRKFEYEMTNKVSLEHLGELLARPEVQRVPGLCFFYSNIQDGLTPILSHYIKNMSSLHTVTIFVTLRSLLVAKVDQSKRILINRLGPNGVYGCTVQYGYADNLSLEGGDDLAAQVTSCLQWHIQMDTDGRRSPEEEMAQLEAARLAGVVHVRGKMRFYVGEDAGWFDKIMLGFYEFLHGICRSALPVLGMPLQQRVEIGMLYKV.

The disordered stretch occupies residues 1–25 (MDLEAGSIRPRSDGEGGGPAAGRET). The Cytoplasmic portion of the chain corresponds to 1 to 34 (MDLEAGSIRPRSDGEGGGPAAGRETDDSNVWKDL). A helical transmembrane segment spans residues 35 to 55 (FLAYKTLGVVFGGLVTSPLYV). The Extracellular segment spans residues 56–71 (YPSMNLSSPTEADYLG). A glycan (N-linked (GlcNAc...) asparagine) is linked at asparagine 60. The chain crosses the membrane as a helical span at residues 72–92 (IYSIMFWTLTLIGVVKYVCIA). Over 93-157 (LNADDHGEGG…FFEQSITARR (65 aa)) the chain is Cytoplasmic. Residues 158–178 (VLLFVAVLGMCMLIGDGILTP) form a helical membrane-spanning segment. The Extracellular segment spans residues 179-194 (AISVLSAIDGIRGPFP). A helical membrane pass occupies residues 195–215 (TVSKPVVEALSAAILIGLFLL). Residues 216 to 222 (QKYGTSK) are Cytoplasmic-facing. The helical transmembrane segment at 223–243 (VSFLFSPIMAAWTFTTPIIGL) threads the bilayer. At 244-276 (YSIVHYYPGIFKAISPYYIVHFFLRNKRQGWQL) the chain is on the extracellular side. A helical membrane pass occupies residues 277 to 297 (LGGTVLCITGAEAMFADLGHF). The Cytoplasmic portion of the chain corresponds to 298–305 (SKKAIQIA). A helical membrane pass occupies residues 306 to 326 (FLSSIYPSLVLTYAGQTAYLI). The Extracellular portion of the chain corresponds to 327 to 343 (NNVNDFGDGFYKFVPRP). The helical transmembrane segment at 344 to 364 (VYWPMFVVATLAAIVASQSLI) threads the bilayer. At 365-402 (SATFSVIKQSVVLDYFPRVKVVHTSQHKEGEVYSPEIN) the chain is on the cytoplasmic side. Residues 403-423 (YILMVLCVGVILGFGGGKAIG) traverse the membrane as a helical segment. Topologically, residues 424–427 (NAFG) are extracellular. The helical transmembrane segment at 428 to 448 (VVVIMVMLITTVLLTLVMIII) threads the bilayer. The Cytoplasmic segment spans residues 449–454 (WRTPLV). The chain crosses the membrane as a helical span at residues 455–475 (LAGLYFVPFFIMEGAYVSAVF). Residues 476 to 480 (TKIPE) lie on the Extracellular side of the membrane. The chain crosses the membrane as a helical span at residues 481-501 (GGWLPFAVSITLAMIMFGWYY). The Cytoplasmic segment spans residues 502 to 707 (GRQRKFEYEM…RVEIGMLYKV (206 aa)).

It belongs to the HAK/KUP transporter (TC 2.A.72.3) family.

The protein localises to the membrane. In terms of biological role, high-affinity potassium transporter. In Oryza sativa subsp. japonica (Rice), this protein is Probable potassium transporter 17 (HAK17).